Consider the following 248-residue polypeptide: Aspartate/glutamate leucyltransferase (248 aa).

The protein belongs to the R-transferase family. Bpt subfamily.

It is found in the cytoplasm. The catalysed reaction is N-terminal L-glutamyl-[protein] + L-leucyl-tRNA(Leu) = N-terminal L-leucyl-L-glutamyl-[protein] + tRNA(Leu) + H(+). The enzyme catalyses N-terminal L-aspartyl-[protein] + L-leucyl-tRNA(Leu) = N-terminal L-leucyl-L-aspartyl-[protein] + tRNA(Leu) + H(+). Its function is as follows. Functions in the N-end rule pathway of protein degradation where it conjugates Leu from its aminoacyl-tRNA to the N-termini of proteins containing an N-terminal aspartate or glutamate. This Methylorubrum extorquens (strain PA1) (Methylobacterium extorquens) protein is Aspartate/glutamate leucyltransferase.